The primary structure comprises 722 residues: MAR-binding filament-like protein 1-1 (722 aa).

The segment at 1-20 (MGSSCFPQSPLSHSLFSSSS) is disordered. The transit peptide at 1 to 50 (MGSSCFPQSPLSHSLFSSSSLSSSQFTPLLFSPRNAQKCKKKMPAMACIH) directs the protein to the chloroplast. A thylakoid-targeting transit peptide spans 51–84 (SENQKESEFCSRRTILFVGFSVLPLLSLRANAFE). Residues 85 to 112 (GLSVDSQVKAQPQKEETEQTIQGNAENP) lie on the Lumenal, thylakoid side of the membrane. The helical transmembrane segment at 113–133 (FFSLLNGLGVFGSGVLGSLYA) threads the bilayer. The Stromal segment spans residues 134 to 722 (LARNEKAVSD…TQPASQQESS (589 aa)). Residues 146-679 (IESMKNKLKE…KGEILRLRTQ (534 aa)) are a coiled coil. The disordered stretch occupies residues 687-722 (VNNEEKVEAGEKAAVTVKRTRRRKTATQPASQQESS). The Nuclear localization signal signature appears at 705–712 (RTRRRKTA).

In terms of assembly, interacts with PTST2; the interaction is essential for the initiation of starch granules biosynthesis in leaf chloroplasts, for the correct location of the process in the stromal spaces between the thylakoid membranes, and for the association of PTST2 with the thylakoid membranes. Post-translationally, predicted to be translocated into the thylakoid by the Tat system.

It localises to the plastid. The protein resides in the chloroplast. Its subcellular location is the chloroplast thylakoid membrane. The protein localises to the chloroplast stroma. It is found in the chloroplast nucleoid. It localises to the nucleus. The protein resides in the nucleus matrix. Its function is as follows. Required for the initiation of starch granules biosynthesis in leaf chloroplasts. Anchored to the thylakoid membranes with its C-terminus facing into the stroma where it is essential for localizing PTST2 and SS4 to the stromal spaces between the thylakoid membranes in order to begin starch granule formation. Associated with leaf chloroplastic nucleoids in vivo. Binds to various chloroplastic double-stranded DNA fragments without particular sequence specificity in vitro. May function at the interface between nucleoids and thylakoids possibly by anchoring nucleoids to the thylakoid membrane system in mature chloroplasts. Likely to participate in nuclear architecture by connecting chromatin with the nuclear matrix and potentially with the nuclear envelope. The polypeptide is MAR-binding filament-like protein 1-1 (Nicotiana tabacum (Common tobacco)).